The sequence spans 286 residues: Plasma membrane ascorbate-dependent reductase CYBRD1 (286 aa).

At 1 to 7 (MAMEGYR) the chain is on the cytoplasmic side. A helical membrane pass occupies residues 8 to 32 (GFLGLLVSALLVGFLSVIFVLIWVL). Positions 15–220 (SALLVGFLSV…FGALIFWIVT (206 aa)) constitute a Cytochrome b561 domain. At 33-47 (HFREGLGWDGGALEF) the chain is on the extracellular side. The helical transmembrane segment at 48–69 (NWHPVLAVTGFVFIQGIAIIVY) threads the bilayer. The heme b site is built by H50, R70, and K79. At 70 to 78 (RLPWTWKCS) the chain is on the cytoplasmic side. K79 and K83 together coordinate L-ascorbate. Residues 79–105 (KFLMKSIHAGLNAVAAILAIISVVAVF) traverse the membrane as a helical segment. H86 contacts heme b. The Extracellular portion of the chain corresponds to 106–118 (DYHNVRKIPHMYS). Fe(3+) is bound at residue H108. Residues 115–118 (HMYS) and H120 each bind heme b. A helical transmembrane segment spans residues 119 to 144 (LHSWVGLTVLILYIQQLVVGFFIFLL). Residues 145–151 (PWAPPSL) are Cytoplasmic-facing. R152 provides a ligand contact to L-ascorbate. A helical transmembrane segment spans residues 152–179 (RAIVMPIHVYSGLLLFGTVIATVLMGVT). Residues H159 and E180 each contribute to the heme b site. At 180 to 197 (EKLFFVLKNPSYHSFPPE) the chain is on the extracellular side. The chain crosses the membrane as a helical span at residues 198–222 (GVFTNTLGLLILVFGALIFWIVTRP). At 223–286 (QWKRPREPGS…LVDTGQRSTM (64 aa)) the chain is on the cytoplasmic side. K225 contacts heme b. S232 carries the phosphoserine modification. T285 bears the Phosphothreonine mark.

In terms of assembly, homodimer. Requires heme b as cofactor. As to expression, highly expressed in all regions of the small intestine and colon studied in suckling animals. However, after weaning, when iron absorption declines significantly, strong expression is retained only in the duodenum. Also expressed in respiratory epithelium.

The protein localises to the cell membrane. It localises to the apical cell membrane. It carries out the reaction Fe(3+)(out) + L-ascorbate(in) = monodehydro-L-ascorbate radical(in) + Fe(2+)(out) + H(+). The enzyme catalyses Cu(2+)(out) + L-ascorbate(in) = Cu(+)(out) + monodehydro-L-ascorbate radical(in) + H(+). The catalysed reaction is monodehydro-L-ascorbate radical(out) + L-ascorbate(in) = monodehydro-L-ascorbate radical(in) + L-ascorbate(out). Plasma membrane reductase that uses cytoplasmic ascorbate as an electron donor to reduce extracellular Fe(3+) into Fe(2+). Probably functions in dietary iron absorption at the brush border of duodenal enterocytes by producing Fe(2+), the divalent form of iron that can be transported into enterocytes. It is also able to reduce extracellular monodehydro-L-ascorbate and may be involved in extracellular ascorbate regeneration by erythrocytes in blood. May also act as a ferrireductase in airway epithelial cells. May also function as a cupric transmembrane reductase. The protein is Plasma membrane ascorbate-dependent reductase CYBRD1 of Rattus norvegicus (Rat).